The chain runs to 952 residues: Leucine--tRNA ligase (952 aa).

The short motif at 66 to 77 is the 'HIGH' region element; that stretch reads PYPSGAGLHVGH. Residues 722–726 carry the 'KMSKS' region motif; it reads KMGKS. Lysine 725 contributes to the ATP binding site.

The protein belongs to the class-I aminoacyl-tRNA synthetase family.

The protein localises to the cytoplasm. The catalysed reaction is tRNA(Leu) + L-leucine + ATP = L-leucyl-tRNA(Leu) + AMP + diphosphate. The protein is Leucine--tRNA ligase of Corynebacterium glutamicum (strain ATCC 13032 / DSM 20300 / JCM 1318 / BCRC 11384 / CCUG 27702 / LMG 3730 / NBRC 12168 / NCIMB 10025 / NRRL B-2784 / 534).